The sequence spans 288 residues: tRNA dimethylallyltransferase (288 aa).

Glycine 17–serine 24 is an ATP binding site. Threonine 19–serine 24 is a binding site for substrate.

This sequence belongs to the IPP transferase family. As to quaternary structure, monomer. Requires Mg(2+) as cofactor.

The enzyme catalyses adenosine(37) in tRNA + dimethylallyl diphosphate = N(6)-dimethylallyladenosine(37) in tRNA + diphosphate. Its function is as follows. Catalyzes the transfer of a dimethylallyl group onto the adenine at position 37 in tRNAs that read codons beginning with uridine, leading to the formation of N6-(dimethylallyl)adenosine (i(6)A). This Ruegeria sp. (strain TM1040) (Silicibacter sp.) protein is tRNA dimethylallyltransferase.